Reading from the N-terminus, the 526-residue chain is ATP synthase subunit alpha 2 (526 aa).

Position 171–178 (171–178 (GDRQTGKT)) interacts with ATP.

It belongs to the ATPase alpha/beta chains family. As to quaternary structure, F-type ATPases have 2 components, CF(1) - the catalytic core - and CF(0) - the membrane proton channel. CF(1) has five subunits: alpha(3), beta(3), gamma(1), delta(1), epsilon(1). CF(0) has four main subunits: a(1), b(1), b'(1) and c(9-12).

Its subcellular location is the cell inner membrane. It carries out the reaction ATP + H2O + 4 H(+)(in) = ADP + phosphate + 5 H(+)(out). Functionally, produces ATP from ADP in the presence of a proton gradient across the membrane. The alpha chain is a regulatory subunit. The chain is ATP synthase subunit alpha 2 from Chlorobium luteolum (strain DSM 273 / BCRC 81028 / 2530) (Pelodictyon luteolum).